A 329-amino-acid chain; its full sequence is DNA repair and recombination protein RadA (329 aa).

An ATP-binding site is contributed by 107-114 (GEFGSGKS).

Belongs to the eukaryotic RecA-like protein family.

Functionally, involved in DNA repair and in homologous recombination. Binds and assemble on single-stranded DNA to form a nucleoprotein filament. Hydrolyzes ATP in a ssDNA-dependent manner and promotes DNA strand exchange between homologous DNA molecules. The protein is DNA repair and recombination protein RadA of Methanocorpusculum labreanum (strain ATCC 43576 / DSM 4855 / Z).